Consider the following 2925-residue polypeptide: Otogelin (2925 aa).

The signal sequence occupies residues 1 to 25 (MGVLASALCWLLCVWLPWGEQAAES). A disordered region spans residues 39-69 (GRSGARGMRNVKGMRNGPAQTRVSSSSSHQE). Over residues 56–69 (PAQTRVSSSSSHQE) the composition is skewed to polar residues. Residues 102-139 (HRAKCAPSYLFSCFNGGECVHPAFCDCRRFNATGPRCQ) form the EGF-like domain. Disulfide bonds link C106-C120, C114-C126, C128-C138, C152-C285, and C199-C206. Positions 150–322 (SICRAWGQHH…SWQEQAPNQP (173 aa)) constitute a VWFD 1 domain. The segment at 316–335 (EQAPNQPPGPTTSSLPRPPC) is disordered. A compositionally biased stretch (polar residues) spans 326-335 (TTSSLPRPPC). Positions 512–688 (AECSVTGDIH…NSWKTLSACS (177 aa)) constitute a VWFD 2 domain. 3 disulfide bridges follow: C514/C652, C536/C687, and C558/C566. A TIL domain is found at 780–844 (CEASKEYSPC…ADLCVPRNQC (65 aa)). N-linked (GlcNAc...) asparagine glycosylation is present at N914. The VWFD 3 domain maps to 984 to 1152 (STCTAYGDRH…SWAAVECPDT (169 aa)). Disulfide bonds link C986–C1115 and C1030–C1037. Residues 1476–1540 (LGNETLPPSQ…PVVSPGPTQT (65 aa)) are disordered. N1478 is a glycosylation site (N-linked (GlcNAc...) asparagine). Positions 1502–1528 (PRTPTHRPALTPAAPLTTALNPPVTAT) are enriched in low complexity. N1612 is a glycosylation site (N-linked (GlcNAc...) asparagine). Disordered stretches follow at residues 1636-1679 (GHGS…HKAV), 1693-1715 (VPQP…AGTA), and 1737-1788 (KGEA…ASLS). Residues 1650–1659 (SLTASPSSRP) show a composition bias toward polar residues. Low complexity predominate over residues 1694–1708 (PQPTQAQSASSPSTP). Positions 1751 to 1764 (SPQPHPLPSAPPRP) are enriched in pro residues. In terms of domain architecture, VWFD 4 spans 2110-2289 (CRCSIFPDLS…SWQVPSSLTS (180 aa)). 5 disulfide bridges follow: C2112–C2249, C2840–C2889, C2854–C2903, C2865–C2920, and C2869–C2922. The region spanning 2840 to 2925 (CKKVTIRMTI…EPTDCACQWS (86 aa)) is the CTCK domain.

This sequence belongs to the otogelin family. N-glycosylated. Not O-glycosylated.

Its subcellular location is the apical cell membrane. It localises to the secreted. The protein resides in the extracellular space. In terms of biological role, glycoprotein specific to acellular membranes of the inner ear. May be required for the anchoring of the otoconial membranes and cupulae to the underlying neuroepithelia in the vestibule. May be involved in the organization and/or stabilization of the fibrillar network that compose the tectorial membrane in the cochlea. May play a role in mechanotransduction processes. This chain is Otogelin (OTOG), found in Homo sapiens (Human).